We begin with the raw amino-acid sequence, 47 residues long: uncharacterized protein (47 aa).

A signal peptide spans 1–25; it reads MAHKCASAKLLSGIMALLFNGKSLL.

This is an uncharacterized protein from Saccharomyces cerevisiae (strain ATCC 204508 / S288c) (Baker's yeast).